Reading from the N-terminus, the 137-residue chain is NADH-ubiquinone oxidoreductase chain 3 (137 aa).

3 helical membrane passes run 6–26 (LFIL…LIFA), 57–77 (FFIF…TFPF), and 86–106 (IYGL…FVYE).

It belongs to the complex I subunit 3 family.

The protein localises to the mitochondrion membrane. The catalysed reaction is a ubiquinone + NADH + 5 H(+)(in) = a ubiquinol + NAD(+) + 4 H(+)(out). In terms of biological role, core subunit of the mitochondrial membrane respiratory chain NADH dehydrogenase (Complex I) that is believed to belong to the minimal assembly required for catalysis. Complex I functions in the transfer of electrons from NADH to the respiratory chain. The immediate electron acceptor for the enzyme is believed to be ubiquinone. This chain is NADH-ubiquinone oxidoreductase chain 3 (ND3), found in Podospora anserina (strain S / ATCC MYA-4624 / DSM 980 / FGSC 10383) (Pleurage anserina).